We begin with the raw amino-acid sequence, 471 residues long: Alpha-galactosidase (471 aa).

The N-terminal stretch at 1-18 (MFLLYLFTSFAAVSGVLG) is a signal peptide. Cysteines 42 and 74 form a disulfide. Positions 72 and 73 each coordinate substrate. N82 carries an N-linked (GlcNAc...) asparagine glycan. A disulfide bond links C121 and C151. K147 is a binding site for substrate. Catalysis depends on D149, which acts as the Nucleophile. N-linked (GlcNAc...) asparagine glycosylation occurs at N175. R205 contacts substrate. The active-site Proton donor is the D209. 2 disulfide bridges follow: C221/C237 and C223/C230. Residue Q251 participates in substrate binding. Residues N270, N403, N412, N417, N422, N435, and N454 are each glycosylated (N-linked (GlcNAc...) asparagine).

It belongs to the glycosyl hydrolase 27 family. As to quaternary structure, homotetramer.

It is found in the secreted. The catalysed reaction is Hydrolysis of terminal, non-reducing alpha-D-galactose residues in alpha-D-galactosides, including galactose oligosaccharides, galactomannans and galactolipids.. In Saccharomyces pastorianus (strain ATCC 76529 / Carlsberg bottom yeast no.1 / CBS 1513 / CLIB 176 / NBRC 1167 / NCYC 396 / NRRL Y-12693) (Saaz-type lager yeast), this protein is Alpha-galactosidase (MEL).